The following is a 451-amino-acid chain: V-type proton ATPase subunit S1 (451 aa).

The first 16 residues, 1-16 (MRVLFAVFSLIMACQA), serve as a signal peptide directing secretion. Residues 17 to 407 (YDAVLFSNSR…DCTGTFSSGS (391 aa)) are Lumenal-facing. Asn-191, Asn-235, Asn-249, and Asn-330 each carry an N-linked (GlcNAc...) asparagine glycan. The chain crosses the membrane as a helical span at residues 408 to 428 (WMGIVSALVLIAGLMFGYVML). The Cytoplasmic portion of the chain corresponds to 429-451 (QSVQTMDRFDDPKQRQIVINVRE).

It belongs to the vacuolar ATPase subunit S1 family. Accessory component of the multisubunit proton-transporting vacuolar (V)-ATPase protein pump. In terms of tissue distribution, expressed in pharynx, hypodermis, intestine, vulval hypodermis and the H-shape excretory cell.

The protein localises to the membrane. Its function is as follows. Accessory subunit of the proton-transporting vacuolar (V)-ATPase protein pump, which is required for luminal acidification of secretory vesicles. In the germline, required for the trafficking of the receptor RME-2 to the oocyte cell membrane where it regulates the uptake of yolk proteins. Also, plays an essential role in osmoregulation in the embryo, probably by regulating the proper formation of the eggshell. This chain is V-type proton ATPase subunit S1, found in Caenorhabditis elegans.